The following is a 145-amino-acid chain: MLSAEEKASVLSLFAKVNVEEVGGEALGRLLVVYPWTQRFFEHFGDLSSADAILGNPKVKAHGKKVLDTFSEGLKQLDDLKGAFASLSELHCDKLHVDPENFRLLGNVLVVVLARRFGGEFTPELQANFQKVVTGVANALAHRYH.

The Globin domain occupies 1-145 (MLSAEEKASV…VANALAHRYH (145 aa)). The heme b site is built by histidine 62 and histidine 91.

This sequence belongs to the globin family. In terms of assembly, heterotetramer of two alpha chains and two beta chains. In terms of tissue distribution, red blood cells.

In terms of biological role, involved in oxygen transport from the lung to the various peripheral tissues. The polypeptide is Hemoglobin fetal subunit beta (Capra hircus (Goat)).